The primary structure comprises 413 residues: NAD-dependent dihydropyrimidine dehydrogenase subunit PreT homolog (413 aa).

Glutamate 287 serves as a coordination point for NAD(+).

Belongs to the NADH dehydrogenase family. As to quaternary structure, heterotetramer of 2 PreA and 2 PreT subunits.

The catalysed reaction is 5,6-dihydrouracil + NAD(+) = uracil + NADH + H(+). It catalyses the reaction 5,6-dihydrothymine + NAD(+) = thymine + NADH + H(+). Involved in pyrimidine base degradation. Catalyzes physiologically the reduction of uracil to 5,6-dihydrouracil (DHU) by using NADH as a specific cosubstrate. It also catalyzes the reverse reaction and the reduction of thymine to 5,6-dihydrothymine (DHT). The protein is NAD-dependent dihydropyrimidine dehydrogenase subunit PreT homolog (preT) of Salmonella typhi.